The sequence spans 257 residues: Type III pantothenate kinase (257 aa).

5–12 (DIGNTNIK) serves as a coordination point for ATP. Substrate is bound at residue 107–110 (GSDR). Aspartate 109 serves as the catalytic Proton acceptor. Threonine 133 is a binding site for ATP.

This sequence belongs to the type III pantothenate kinase family. Homodimer. The cofactor is NH4(+). Requires K(+) as cofactor.

The protein localises to the cytoplasm. The catalysed reaction is (R)-pantothenate + ATP = (R)-4'-phosphopantothenate + ADP + H(+). The protein operates within cofactor biosynthesis; coenzyme A biosynthesis; CoA from (R)-pantothenate: step 1/5. Catalyzes the phosphorylation of pantothenate (Pan), the first step in CoA biosynthesis. This Ehrlichia ruminantium (strain Welgevonden) protein is Type III pantothenate kinase.